The following is a 294-amino-acid chain: ATP phosphoribosyltransferase (294 aa).

The protein belongs to the ATP phosphoribosyltransferase family. Long subfamily. The cofactor is Mg(2+).

The protein resides in the cytoplasm. The catalysed reaction is 1-(5-phospho-beta-D-ribosyl)-ATP + diphosphate = 5-phospho-alpha-D-ribose 1-diphosphate + ATP. It participates in amino-acid biosynthesis; L-histidine biosynthesis; L-histidine from 5-phospho-alpha-D-ribose 1-diphosphate: step 1/9. Its activity is regulated as follows. Feedback inhibited by histidine. Catalyzes the condensation of ATP and 5-phosphoribose 1-diphosphate to form N'-(5'-phosphoribosyl)-ATP (PR-ATP). Has a crucial role in the pathway because the rate of histidine biosynthesis seems to be controlled primarily by regulation of HisG enzymatic activity. This chain is ATP phosphoribosyltransferase, found in Maricaulis maris (strain MCS10) (Caulobacter maris).